Here is a 282-residue protein sequence, read N- to C-terminus: Pantothenate synthetase (282 aa).

30–37 serves as a coordination point for ATP; sequence MGNLHEGH. H37 serves as the catalytic Proton donor. Q61 is a (R)-pantoate binding site. Beta-alanine is bound at residue Q61. 148–151 contacts ATP; that stretch reads GQKD. Position 154 (Q154) interacts with (R)-pantoate. Residues V177 and 185 to 188 each bind ATP; that span reads LSSR.

This sequence belongs to the pantothenate synthetase family. In terms of assembly, homodimer.

It is found in the cytoplasm. It catalyses the reaction (R)-pantoate + beta-alanine + ATP = (R)-pantothenate + AMP + diphosphate + H(+). The protein operates within cofactor biosynthesis; (R)-pantothenate biosynthesis; (R)-pantothenate from (R)-pantoate and beta-alanine: step 1/1. Its function is as follows. Catalyzes the condensation of pantoate with beta-alanine in an ATP-dependent reaction via a pantoyl-adenylate intermediate. The sequence is that of Pantothenate synthetase from Acinetobacter baumannii (strain AB0057).